The sequence spans 543 residues: Tapetal oleosin GRP-17 (543 aa).

Residues methionine 1–lysine 67 form a polar region. The next 3 membrane-spanning stretches (helical) occupy residues isoleucine 68–glycine 88, proline 98–alanine 118, and threonine 119–valine 139. The tract at residues isoleucine 68–alanine 162 is hydrophobic. Disordered regions lie at residues lysine 148–serine 169 and glycine 195–glutamate 543. The segment covering serine 201–glycine 212 has biased composition (gly residues). Tandem repeats lie at residues glycine 220–serine 223, glycine 227–glycine 230, and glycine 234–glycine 237. Residues glycine 220–serine 229 show a composition bias toward low complexity. The 29 X 4 AA approximate tandem repeats of G-M-S-G stretch occupies residues glycine 220–glycine 514. Residues glycine 230–glycine 240 show a composition bias toward gly residues. Residues lysine 244–lysine 256 are compositionally biased toward basic residues. A run of 26 repeats spans residues glycine 259–glycine 262, glycine 269–glycine 272, glycine 276–glycine 279, glycine 301–glycine 304, glycine 305–glycine 308, glycine 312–glycine 315, glycine 319–serine 322, serine 344–glycine 347, glycine 348–glycine 351, glycine 355–glycine 358, glycine 362–glycine 365, cysteine 387–glycine 390, glycine 391–glycine 394, glycine 398–arginine 401, glycine 405–glycine 408, glycine 410–glycine 413, glycine 414–serine 417, glycine 438–glycine 441, glycine 445–glycine 448, glycine 458–serine 461, glycine 464–glycine 467, glycine 468–serine 471, glycine 492–glycine 495, glycine 499–glycine 502, glycine 506–glutamate 509, and glycine 511–glycine 514. Residues glycine 272–serine 283 are compositionally biased toward gly residues. Positions serine 285–glycine 301 are enriched in basic residues. A compositionally biased stretch (gly residues) spans glycine 315–serine 326. The span at serine 328–serine 344 shows a compositional bias: basic residues. Residues methionine 345 to serine 357 show a composition bias toward low complexity. Residues glycine 358–lysine 370 show a composition bias toward gly residues. Over residues serine 371 to cysteine 387 the composition is skewed to basic residues. 2 stretches are compositionally biased toward gly residues: residues glycine 405–glycine 416 and serine 440–glycine 470. The segment covering serine 471 to glycine 492 has biased composition (basic residues). The span at glycine 495 to glycine 505 shows a compositional bias: gly residues. Basic residues predominate over residues glycine 518–glycine 531. Positions glycine 532–glutamate 543 are enriched in gly residues.

Belongs to the oleosin family. Proteolytically cleaved following anther tapetal breakdown. Flower specific, especially in anther tapetum, pollen (at protein level) and flowers florets.

It is found in the secreted. It localises to the extracellular space. The protein resides in the extracellular matrix. Its subcellular location is the pollen coat. The protein localises to the lipid droplet. It is found in the membrane. In terms of biological role, lipid-binding oleosin pollen coat protein required to mediate pollen recognition by stigma cells and subsequent pollen hydration. Involved in anther tapetum development, especially for the physiology of tapetosomes. Also implicated in the formation of pollen coat. This chain is Tapetal oleosin GRP-17, found in Arabidopsis thaliana (Mouse-ear cress).